Consider the following 429-residue polypeptide: Glutamate--tRNA ligase 1 (429 aa).

The 'HIGH' region signature appears at 6-16 (PSPTGDMHIGN). A 'KMSKS' region motif is present at residues 235-239 (KMSKR). Lys-238 contacts ATP.

Belongs to the class-I aminoacyl-tRNA synthetase family. Glutamate--tRNA ligase type 1 subfamily. In terms of assembly, monomer.

The protein localises to the cytoplasm. The catalysed reaction is tRNA(Glu) + L-glutamate + ATP = L-glutamyl-tRNA(Glu) + AMP + diphosphate. Catalyzes the attachment of glutamate to tRNA(Glu) in a two-step reaction: glutamate is first activated by ATP to form Glu-AMP and then transferred to the acceptor end of tRNA(Glu). The chain is Glutamate--tRNA ligase 1 from Campylobacter fetus subsp. fetus (strain 82-40).